Consider the following 146-residue polypeptide: Large ribosomal subunit protein uL15 (146 aa).

The disordered stretch occupies residues 1–56 (MSDIQLNTLKPAEGSKHAKRRVGRGIGSGLGKTAGRGHKGQKSRSGGFHKVGFEGG). Gly residues predominate over residues 24-34 (RGIGSGLGKTA).

It belongs to the universal ribosomal protein uL15 family. In terms of assembly, part of the 50S ribosomal subunit.

Binds to the 23S rRNA. This Bordetella bronchiseptica (strain ATCC BAA-588 / NCTC 13252 / RB50) (Alcaligenes bronchisepticus) protein is Large ribosomal subunit protein uL15.